Consider the following 357-residue polypeptide: UDP-N-acetylglucosamine--N-acetylmuramyl-(pentapeptide) pyrophosphoryl-undecaprenol N-acetylglucosamine transferase (357 aa).

Residues 10–12 (TGG), Asn124, Ser189, Ile244, and Gln289 contribute to the UDP-N-acetyl-alpha-D-glucosamine site.

It belongs to the glycosyltransferase 28 family. MurG subfamily.

Its subcellular location is the cell membrane. The catalysed reaction is Mur2Ac(oyl-L-Ala-gamma-D-Glu-L-Lys-D-Ala-D-Ala)-di-trans,octa-cis-undecaprenyl diphosphate + UDP-N-acetyl-alpha-D-glucosamine = beta-D-GlcNAc-(1-&gt;4)-Mur2Ac(oyl-L-Ala-gamma-D-Glu-L-Lys-D-Ala-D-Ala)-di-trans,octa-cis-undecaprenyl diphosphate + UDP + H(+). It participates in cell wall biogenesis; peptidoglycan biosynthesis. Its function is as follows. Cell wall formation. Catalyzes the transfer of a GlcNAc subunit on undecaprenyl-pyrophosphoryl-MurNAc-pentapeptide (lipid intermediate I) to form undecaprenyl-pyrophosphoryl-MurNAc-(pentapeptide)GlcNAc (lipid intermediate II). The polypeptide is UDP-N-acetylglucosamine--N-acetylmuramyl-(pentapeptide) pyrophosphoryl-undecaprenol N-acetylglucosamine transferase (Lactococcus lactis subsp. lactis (strain IL1403) (Streptococcus lactis)).